The chain runs to 472 residues: Protein nucleotidyltransferase YdiU (472 aa).

ATP contacts are provided by Gly-86, Gly-88, Arg-89, Lys-109, Asp-121, Gly-122, Arg-172, and Arg-179. Asp-244 functions as the Proton acceptor in the catalytic mechanism. 2 residues coordinate Mg(2+): Asn-245 and Asp-254. Asp-254 is a binding site for ATP.

It belongs to the SELO family. Mg(2+) serves as cofactor. Mn(2+) is required as a cofactor.

It carries out the reaction L-seryl-[protein] + ATP = 3-O-(5'-adenylyl)-L-seryl-[protein] + diphosphate. The catalysed reaction is L-threonyl-[protein] + ATP = 3-O-(5'-adenylyl)-L-threonyl-[protein] + diphosphate. It catalyses the reaction L-tyrosyl-[protein] + ATP = O-(5'-adenylyl)-L-tyrosyl-[protein] + diphosphate. The enzyme catalyses L-histidyl-[protein] + UTP = N(tele)-(5'-uridylyl)-L-histidyl-[protein] + diphosphate. It carries out the reaction L-seryl-[protein] + UTP = O-(5'-uridylyl)-L-seryl-[protein] + diphosphate. The catalysed reaction is L-tyrosyl-[protein] + UTP = O-(5'-uridylyl)-L-tyrosyl-[protein] + diphosphate. In terms of biological role, nucleotidyltransferase involved in the post-translational modification of proteins. It can catalyze the addition of adenosine monophosphate (AMP) or uridine monophosphate (UMP) to a protein, resulting in modifications known as AMPylation and UMPylation. The chain is Protein nucleotidyltransferase YdiU from Ruegeria pomeroyi (strain ATCC 700808 / DSM 15171 / DSS-3) (Silicibacter pomeroyi).